We begin with the raw amino-acid sequence, 310 residues long: tRNA uridine(34) hydroxylase (310 aa).

Positions 127–225 (KNQNTIVIDT…YLDDIPKEKN (99 aa)) constitute a Rhodanese domain. Cys185 functions as the Cysteine persulfide intermediate in the catalytic mechanism.

The protein belongs to the TrhO family.

It carries out the reaction uridine(34) in tRNA + AH2 + O2 = 5-hydroxyuridine(34) in tRNA + A + H2O. Functionally, catalyzes oxygen-dependent 5-hydroxyuridine (ho5U) modification at position 34 in tRNAs. In Prochlorococcus marinus (strain MIT 9312), this protein is tRNA uridine(34) hydroxylase.